A 196-amino-acid polypeptide reads, in one-letter code: Autophagy-related protein 31 (196 aa).

The tract at residues 20-45 (IKNNKGPSNDDQPAYNNESKSTDGSD) is disordered. Over residues 22 to 43 (NNKGPSNDDQPAYNNESKSTDG) the composition is skewed to polar residues. Residues S38 and S40 each carry the phosphoserine modification. T41 carries the post-translational modification Phosphothreonine. Phosphoserine occurs at positions 44 and 116. Positions 120-129 (EENQMRTLSS) are enriched in polar residues. The interval 120–145 (EENQMRTLSSHGDDKSNDEEEELSVD) is disordered. Phosphoserine occurs at positions 135, 143, 146, 153, 174, and 195. Residues 135–144 (SNDEEEELSV) show a composition bias toward acidic residues.

As to quaternary structure, forms a stable complex with ATG17 and ATG29. Interacts directly with ATG29. The ATG17-ATG29-ATG31 complex interacts with the ATG1-ATG13 complex. Note=The interaction with the ATG1-ATG13 complex is induced by starvation. In terms of processing, highly phosphorylated. Ser-174 is phosphorylated constitutively. Phosphorylation at Ser-174 is required for autophagy induced by various autophagy stimuli such as nitrogen starvation and rapamycin treatment.

The protein localises to the cytoplasm. The protein resides in the cytoskeleton. It localises to the preautophagosomal structure. In terms of biological role, plays a role in starvation-induced autophagy. Involved in mitophagy. Functions with ATG17 and ATG29 at the preautophagosomal structure (PAS) in order to form normal autophagosomes under starvation conditions. May be involved in microtubule function, such as chromosome segregation and karyogamy. In Saccharomyces cerevisiae (strain ATCC 204508 / S288c) (Baker's yeast), this protein is Autophagy-related protein 31 (ATG31).